The sequence spans 129 residues: Fluoride-specific ion channel FluC 2 (129 aa).

4 helical membrane passes run leucine 4 to glycine 24, threonine 39 to valine 59, tyrosine 65 to serine 85, and valine 104 to leucine 124. Residues glycine 79 and threonine 82 each contribute to the Na(+) site.

Belongs to the fluoride channel Fluc/FEX (TC 1.A.43) family.

It localises to the cell inner membrane. The enzyme catalyses fluoride(in) = fluoride(out). Its activity is regulated as follows. Na(+) is not transported, but it plays an essential structural role and its presence is essential for fluoride channel function. In terms of biological role, fluoride-specific ion channel. Important for reducing fluoride concentration in the cell, thus reducing its toxicity. The protein is Fluoride-specific ion channel FluC 2 of Brucella abortus biovar 1 (strain 9-941).